Here is an 80-residue protein sequence, read N- to C-terminus: Defensin-like protein 17 (80 aa).

Positions 1-29 (MAKSATIITFLFAALVLFAAFEAPTMVEA) are cleaved as a signal peptide. Position 30 is a pyrrolidone carboxylic acid (Gln-30). 4 disulfide bridges follow: Cys-33–Cys-80, Cys-44–Cys-65, Cys-50–Cys-74, and Cys-54–Cys-76.

Belongs to the DEFL family.

The protein localises to the secreted. Functionally, confers broad-spectrum resistance to pathogens. In Arabidopsis thaliana (Mouse-ear cress), this protein is Defensin-like protein 17 (PDF1.2C).